The chain runs to 147 residues: Small ribosomal subunit protein uS12 (147 aa).

This sequence belongs to the universal ribosomal protein uS12 family. Part of the 30S ribosomal subunit.

Its function is as follows. With S4 and S5 plays an important role in translational accuracy. Located at the interface of the 30S and 50S subunits. The protein is Small ribosomal subunit protein uS12 of Pyrococcus horikoshii (strain ATCC 700860 / DSM 12428 / JCM 9974 / NBRC 100139 / OT-3).